A 191-amino-acid polypeptide reads, in one-letter code: dTTP/UTP pyrophosphatase (191 aa).

The active-site Proton acceptor is Asp-71.

The protein belongs to the Maf family. YhdE subfamily. A divalent metal cation serves as cofactor.

The protein localises to the cytoplasm. The catalysed reaction is dTTP + H2O = dTMP + diphosphate + H(+). It carries out the reaction UTP + H2O = UMP + diphosphate + H(+). Nucleoside triphosphate pyrophosphatase that hydrolyzes dTTP and UTP. May have a dual role in cell division arrest and in preventing the incorporation of modified nucleotides into cellular nucleic acids. The sequence is that of dTTP/UTP pyrophosphatase from Hyphomonas neptunium (strain ATCC 15444).